The primary structure comprises 225 residues: LHFPL tetraspan subfamily member 2a protein (225 aa).

4 consecutive transmembrane segments (helical) span residues 11-31, 99-119, 129-149, and 178-198; these read MLWT…FLST, IFLA…IFTM, IFNV…VGLV, and AGWA…CAVF.

This sequence belongs to the LHFP family.

It localises to the membrane. Functionally, plays a role in fertility. Involved in distal reproductive tract development. The chain is LHFPL tetraspan subfamily member 2a protein from Danio rerio (Zebrafish).